The chain runs to 746 residues: tRNA(Met) cytidine acetyltransferase TmcA (746 aa).

Positions 181 to 200 are disordered; sequence ARAETGGNPPSPGDSACRTE. ATP is bound by residues glutamine 202, 228–237, and arginine 370; that span reads GRGKSAALGI. One can recognise an N-acetyltransferase domain in the interval 405-617; it reads VAVERLDRDA…VHLPHQLADP (213 aa). Residues 517–519, 524–530, glutamate 557, and arginine 564 contribute to the acetyl-CoA site; these read IAV and QGQGLGT.

Belongs to the RNA cytidine acetyltransferase family. TmcA subfamily.

The protein localises to the cytoplasm. It carries out the reaction cytidine(34) in elongator tRNA(Met) + acetyl-CoA + ATP + H2O = N(4)-acetylcytidine(34) in elongator tRNA(Met) + ADP + phosphate + CoA + H(+). Catalyzes the formation of N(4)-acetylcytidine (ac(4)C) at the wobble position of tRNA(Met), by using acetyl-CoA as an acetyl donor and ATP (or GTP). The sequence is that of tRNA(Met) cytidine acetyltransferase TmcA from Nitrosococcus halophilus (strain Nc4).